The following is a 293-amino-acid chain: Formamidopyrimidine-DNA glycosylase (293 aa).

The Schiff-base intermediate with DNA role is filled by P2. E3 acts as the Proton donor in catalysis. The active-site Proton donor; for beta-elimination activity is the K58. The DNA site is built by H104, R127, and R170. The segment at 257–293 adopts an FPG-type zinc-finger fold; the sequence is SVYGREGKPCRNPACGGTVERVVQSGRSTFFCASCQT. The active-site Proton donor; for delta-elimination activity is the R283.

It belongs to the FPG family. As to quaternary structure, monomer. The cofactor is Zn(2+).

The catalysed reaction is Hydrolysis of DNA containing ring-opened 7-methylguanine residues, releasing 2,6-diamino-4-hydroxy-5-(N-methyl)formamidopyrimidine.. The enzyme catalyses 2'-deoxyribonucleotide-(2'-deoxyribose 5'-phosphate)-2'-deoxyribonucleotide-DNA = a 3'-end 2'-deoxyribonucleotide-(2,3-dehydro-2,3-deoxyribose 5'-phosphate)-DNA + a 5'-end 5'-phospho-2'-deoxyribonucleoside-DNA + H(+). Its function is as follows. Involved in base excision repair of DNA damaged by oxidation or by mutagenic agents. Acts as a DNA glycosylase that recognizes and removes damaged bases. Has a preference for oxidized purines, such as 7,8-dihydro-8-oxoguanine (8-oxoG). Has AP (apurinic/apyrimidinic) lyase activity and introduces nicks in the DNA strand. Cleaves the DNA backbone by beta-delta elimination to generate a single-strand break at the site of the removed base with both 3'- and 5'-phosphates. The sequence is that of Formamidopyrimidine-DNA glycosylase from Brucella canis (strain ATCC 23365 / NCTC 10854 / RM-666).